The sequence spans 64 residues: Large ribosomal subunit protein uL30 (64 aa).

The protein belongs to the universal ribosomal protein uL30 family. As to quaternary structure, part of the 50S ribosomal subunit.

In Desulforudis audaxviator (strain MP104C), this protein is Large ribosomal subunit protein uL30.